We begin with the raw amino-acid sequence, 466 residues long: Cysteine--tRNA ligase (466 aa).

Cys28 contacts Zn(2+). The 'HIGH' region motif lies at Pro30–Asn40. Residues Cys208, His233, and Glu237 each coordinate Zn(2+). The 'KMSKS' region signature appears at Lys265–Ser269. Lys268 provides a ligand contact to ATP.

The protein belongs to the class-I aminoacyl-tRNA synthetase family. As to quaternary structure, monomer. It depends on Zn(2+) as a cofactor.

The protein localises to the cytoplasm. It catalyses the reaction tRNA(Cys) + L-cysteine + ATP = L-cysteinyl-tRNA(Cys) + AMP + diphosphate. This is Cysteine--tRNA ligase from Staphylococcus epidermidis (strain ATCC 35984 / DSM 28319 / BCRC 17069 / CCUG 31568 / BM 3577 / RP62A).